The primary structure comprises 107 residues: U1-lycotoxin-Ls1a (107 aa).

Residues 1–20 (MMKVLVVVALLVTLISYSSS) form the signal peptide. The propeptide occupies 21-41 (EGIDDLEADELLSLMANEQTR). 4 disulfides stabilise this stretch: Cys44–Cys59, Cys51–Cys68, Cys58–Cys86, and Cys70–Cys84.

Belongs to the neurotoxin 19 (CSTX) family. 04 (U1-Lctx) subfamily. In terms of tissue distribution, expressed by the venom gland.

It is found in the secreted. This is U1-lycotoxin-Ls1a from Lycosa singoriensis (Wolf spider).